We begin with the raw amino-acid sequence, 245 residues long: MYRYKITIEYLGTDLAGWQRQAGVMSVQQILEEAIYKFSGEQVILFGSGRTDAGVHAVGQVAHFDLSKYLEPHKIITAINYFARPYAVGVWNCELAPNNFHARFSATSRYYIYRIINRPCPSVIDLNRAWWISSPLDVPAMQQAAAYLLGKHDFTSFRASSCQSKSPIKTLTELNIIKEDEEIKLYLSAPSFLHHMVRNIVGSLVLVGKNIWQAEQIKDVLEAKDRKAAGPTAPASGLYFVKAAY.

Asp52 functions as the Nucleophile in the catalytic mechanism. Residue Tyr111 coordinates substrate.

The protein belongs to the tRNA pseudouridine synthase TruA family. In terms of assembly, homodimer.

It carries out the reaction uridine(38/39/40) in tRNA = pseudouridine(38/39/40) in tRNA. Functionally, formation of pseudouridine at positions 38, 39 and 40 in the anticodon stem and loop of transfer RNAs. The sequence is that of tRNA pseudouridine synthase A from Rickettsia peacockii (strain Rustic).